We begin with the raw amino-acid sequence, 255 residues long: 5'-nucleotidase SurE (255 aa).

A divalent metal cation is bound by residues D8, D9, S39, and N91.

This sequence belongs to the SurE nucleotidase family. The cofactor is a divalent metal cation.

It localises to the cytoplasm. The enzyme catalyses a ribonucleoside 5'-phosphate + H2O = a ribonucleoside + phosphate. In terms of biological role, nucleotidase that shows phosphatase activity on nucleoside 5'-monophosphates. This chain is 5'-nucleotidase SurE, found in Acinetobacter baumannii (strain AB0057).